The primary structure comprises 221 residues: Protein DEHYDRATION-INDUCED 19 homolog 2 (221 aa).

Disordered stretches follow at residues 1–24 (MEDD…TAAK) and 162–193 (VLPD…SDSD).

It belongs to the Di19 family. In terms of processing, not phosphorylated in vitro by CPK3 or CPK11. As to expression, expressed in seedlings, roots, leaves, stems, flowers and siliques.

It is found in the cytoplasm. Its subcellular location is the nucleus. The chain is Protein DEHYDRATION-INDUCED 19 homolog 2 (DI19-2) from Arabidopsis thaliana (Mouse-ear cress).